The sequence spans 218 residues: MTEWITAPGLTDYQEALAFMEARAAAIAAGEAGELVWLVEHPPLYTAGTSAKAADLLEARFPVHAVGRGGQYTYHGPGQRVVYVMLDLNRRGRDVRAFVKALENWVIDALAEFNLRGEIRDGRVGVWIARPDKAPLPDGSMREDKIAAIGVKLRRWVSFHGIAINVEPDLNHYAGIVPCGISGHGVTSLVDMGLPVGMDDLDLALRRSFARNFPPLAG.

Residues Gly30–Ala217 enclose the BPL/LPL catalytic domain. Substrate-binding positions include Arg68–His75, Ala148–Gly150, and Gly161–Ala163. Residue Cys179 is the Acyl-thioester intermediate of the active site.

The protein belongs to the LipB family.

The protein localises to the cytoplasm. The enzyme catalyses octanoyl-[ACP] + L-lysyl-[protein] = N(6)-octanoyl-L-lysyl-[protein] + holo-[ACP] + H(+). The protein operates within protein modification; protein lipoylation via endogenous pathway; protein N(6)-(lipoyl)lysine from octanoyl-[acyl-carrier-protein]: step 1/2. Functionally, catalyzes the transfer of endogenously produced octanoic acid from octanoyl-acyl-carrier-protein onto the lipoyl domains of lipoate-dependent enzymes. Lipoyl-ACP can also act as a substrate although octanoyl-ACP is likely to be the physiological substrate. This Paracoccus denitrificans (strain Pd 1222) protein is Octanoyltransferase.